We begin with the raw amino-acid sequence, 369 residues long: Peptide chain release factor 2 (369 aa).

Gln-251 is subject to N5-methylglutamine.

Belongs to the prokaryotic/mitochondrial release factor family. Methylated by PrmC. Methylation increases the termination efficiency of RF2.

It is found in the cytoplasm. Functionally, peptide chain release factor 2 directs the termination of translation in response to the peptide chain termination codons UGA and UAA. The chain is Peptide chain release factor 2 from Acidothermus cellulolyticus (strain ATCC 43068 / DSM 8971 / 11B).